Reading from the N-terminus, the 858-residue chain is Protein VACUOLELESS1 (858 aa).

It belongs to the VPS16 family. Core component of at least two putative endosomal tethering complexes, the homotypic fusion and vacuole protein sorting (HOPS) complex and the class C core vacuole/endosome tethering (CORVET) complex. Their common core is composed of the class C Vps proteins VPS11, VCL1, VPS18 and VPS33, which in HOPS further associates with VPS39 and VPS41 and in CORVET with VPS3. In terms of tissue distribution, expressed in roots, leaves, stems, siliques, flowers and mature pollen.

The protein localises to the vacuole membrane. The protein resides in the prevacuolar compartment membrane. Functionally, required for vacuole biogenesis and vacuole enlargment in dividing and expanding cells. Involved in the docking or fusion of prevacuolar vesicles. Important for the function of both male and female gametophytes, but is not essential for the germination and development of pollen. This is Protein VACUOLELESS1 (VCL1) from Arabidopsis thaliana (Mouse-ear cress).